Reading from the N-terminus, the 356-residue chain is Alternative oxidase, mitochondrial (356 aa).

The chain crosses the membrane as a helical span at residues 152-172 (VIRFIFLETVAGVPGMVGGML). The Fe cation site is built by Glu-159, Glu-198, and His-201. Residues 217–237 (LMVLGAQGVFFNGFFISYLIS) form a helical membrane-spanning segment. The Fe cation site is built by Glu-249, Glu-304, and His-307. The tract at residues 330-356 (YDNPEAPHPTKSAEIVKPTGWERDEVI) is disordered.

It belongs to the alternative oxidase family. The cofactor is Fe cation.

Its subcellular location is the mitochondrion inner membrane. Its function is as follows. Catalyzes cyanide-resistant oxygen consumption. May increase respiration when the cytochrome respiratory pathway is restricted, or in response to low temperatures. This chain is Alternative oxidase, mitochondrial (AOX1), found in Ajellomyces capsulatus (Darling's disease fungus).